The sequence spans 659 residues: WD repeat-containing protein 48 homolog (659 aa).

WD repeat units follow at residues 27–66 (RHRNGVNALQLDTINGRLYSAGRDAIIRVWNSMQNNSQEP), 73–112 (HHNDWVNDIVLCCGGRNLISASCDTTVKVWNAHKGFCMST), 115–154 (THRDYVQALAYAKDREQVASAGLDKAIFLWDINTLTALTA), 166–205 (GSKDSIYSLAMNPSGTVIVCGSTENTLRIWDPRTCNKIAK), 208–247 (GHAENVKALVVSEDGQHVISGSSDGKIKQWSIGQQRCVQT), 250–289 (VHSEGVWALLMTDNFSHVISGSRDKKIIMTDLRNPTNSVL), 292–331 (EERAPVLSLCYNYDQTGVWATTWNSDIRCWKLNPSEKLSF), and 337–376 (KGGAAIKKYHVLNDKRFMLTKDSEMNVAIYDVLKVKKVED). Residues 592-613 (ASTGNSNSSQNNSQSDANSEGS) are disordered. A compositionally biased stretch (low complexity) spans 596 to 610 (NSNSSQNNSQSDANS).

It belongs to the WD repeat WDR48 family. In terms of assembly, catalytic component of the Usp12-46 deubiquitylase complex consisting of Usp12-46, Wdr20 and Uaf1; regulatory subunit that, together wtih Wdr20, stabilizes Usp12-46. The Usp12-46 deubiquitylase complex associates with arr/arrow; the interaction leads to deubiquitination and stabilization of arr/arrow.

Its function is as follows. Regulatory component of the Usp12-46 deubiquitylase complex. activates deubiquitination by increasing the catalytic turnover without increasing the affinity of deubiquitinating enzymes for the substrate. The complex deubiquitylates the wg/wingless-signaling receptor arr/arrow, which stabilizes the receptor and increases its concentration at the cell surface; this enhances the sensitivity of cells to wg/wingless-signal stimulation. This increases the amplitude and spatial range of the signaling response to the wg/wingless morphogen gradient, facilitating the precise concentration-dependent regulation of its target genes. Together with Wdr20 and Usp12-46 required for wg/wingless-mediated signaling in the wing imaginal disc and for wg/wingless-dependent regulation of intestinal stem cell proliferation. The chain is WD repeat-containing protein 48 homolog from Aedes aegypti (Yellowfever mosquito).